Here is a 1024-residue protein sequence, read N- to C-terminus: Beta-galactosidase (1024 aa).

Substrate contacts are provided by N103 and D202. D202 contacts Na(+). Mg(2+) is bound by residues E417, H419, and E462. Substrate is bound by residues E462 and 538 to 541 (EYAH). E462 (proton donor) is an active-site residue. E538 acts as the Nucleophile in catalysis. A Mg(2+)-binding site is contributed by N598. F602 and N605 together coordinate Na(+). Residues N605 and W1000 each contribute to the substrate site.

Belongs to the glycosyl hydrolase 2 family. In terms of assembly, homotetramer. Mg(2+) serves as cofactor. Na(+) is required as a cofactor.

The catalysed reaction is Hydrolysis of terminal non-reducing beta-D-galactose residues in beta-D-galactosides.. The protein is Beta-galactosidase of Escherichia coli O127:H6 (strain E2348/69 / EPEC).